Here is a 591-residue protein sequence, read N- to C-terminus: Aspartate--tRNA(Asp/Asn) ligase (591 aa).

E174 is a binding site for L-aspartate. Positions 198 to 201 are aspartate; the sequence is QLFK. R220 contributes to the L-aspartate binding site. ATP contacts are provided by residues 220-222 and Q229; that span reads RDE. H450 is an L-aspartate binding site. ATP is bound at residue E483. R490 is an L-aspartate binding site. ATP is bound at residue 535-538; that stretch reads GLDR.

This sequence belongs to the class-II aminoacyl-tRNA synthetase family. Type 1 subfamily. In terms of assembly, homodimer.

The protein resides in the cytoplasm. It catalyses the reaction tRNA(Asx) + L-aspartate + ATP = L-aspartyl-tRNA(Asx) + AMP + diphosphate. Functionally, aspartyl-tRNA synthetase with relaxed tRNA specificity since it is able to aspartylate not only its cognate tRNA(Asp) but also tRNA(Asn). Reaction proceeds in two steps: L-aspartate is first activated by ATP to form Asp-AMP and then transferred to the acceptor end of tRNA(Asp/Asn). The chain is Aspartate--tRNA(Asp/Asn) ligase from Azotobacter vinelandii (strain DJ / ATCC BAA-1303).